We begin with the raw amino-acid sequence, 373 residues long: D-alanine--D-alanine ligase (373 aa).

Positions 156-363 (KKLLAADGLP…YPTLLATMIE (208 aa)) constitute an ATP-grasp domain. Residue 184 to 239 (CERLGLPVFVKPARGGSSIGVSRVSSWDQLPAAVARARRHDPKVIVEAAISGRELE) participates in ATP binding. Positions 318, 330, and 332 each coordinate Mg(2+).

It belongs to the D-alanine--D-alanine ligase family. It depends on Mg(2+) as a cofactor. Mn(2+) is required as a cofactor.

It localises to the cytoplasm. It carries out the reaction 2 D-alanine + ATP = D-alanyl-D-alanine + ADP + phosphate + H(+). The protein operates within cell wall biogenesis; peptidoglycan biosynthesis. Cell wall formation. The polypeptide is D-alanine--D-alanine ligase (Mycobacterium tuberculosis (strain ATCC 25177 / H37Ra)).